The chain runs to 892 residues: Leucine--tRNA ligase (892 aa).

The 'HIGH' region motif lies at P42–H52. The 'KMSKS' region motif lies at T640 to S644. An ATP-binding site is contributed by K643.

The protein belongs to the class-I aminoacyl-tRNA synthetase family.

Its subcellular location is the cytoplasm. The catalysed reaction is tRNA(Leu) + L-leucine + ATP = L-leucyl-tRNA(Leu) + AMP + diphosphate. The sequence is that of Leucine--tRNA ligase from Albidiferax ferrireducens (strain ATCC BAA-621 / DSM 15236 / T118) (Rhodoferax ferrireducens).